The primary structure comprises 364 residues: Mannose-1-phosphate guanyltransferase (364 aa).

This sequence belongs to the transferase hexapeptide repeat family.

The protein resides in the cytoplasm. It carries out the reaction alpha-D-mannose 1-phosphate + GTP + H(+) = GDP-alpha-D-mannose + diphosphate. The protein operates within nucleotide-sugar biosynthesis; GDP-alpha-D-mannose biosynthesis; GDP-alpha-D-mannose from alpha-D-mannose 1-phosphate (GTP route): step 1/1. Functionally, involved in cell wall synthesis where it is required for glycosylation. Involved in cell cycle progression through cell-size checkpoint. In Aspergillus fumigatus (strain ATCC MYA-4609 / CBS 101355 / FGSC A1100 / Af293) (Neosartorya fumigata), this protein is Mannose-1-phosphate guanyltransferase (mpg1).